The primary structure comprises 359 residues: Heat-inducible transcription repressor HrcA (359 aa).

The protein belongs to the HrcA family.

Functionally, negative regulator of class I heat shock genes (grpE-dnaK-dnaJ and groELS operons). Prevents heat-shock induction of these operons. In Roseiflexus castenholzii (strain DSM 13941 / HLO8), this protein is Heat-inducible transcription repressor HrcA.